An 877-amino-acid polypeptide reads, in one-letter code: Phosphoenolpyruvate carboxylase (877 aa).

Active-site residues include histidine 138 and lysine 544.

This sequence belongs to the PEPCase type 1 family. Mg(2+) serves as cofactor.

It catalyses the reaction oxaloacetate + phosphate = phosphoenolpyruvate + hydrogencarbonate. Its function is as follows. Forms oxaloacetate, a four-carbon dicarboxylic acid source for the tricarboxylic acid cycle. In Vibrio parahaemolyticus serotype O3:K6 (strain RIMD 2210633), this protein is Phosphoenolpyruvate carboxylase.